Here is a 283-residue protein sequence, read N- to C-terminus: NAD kinase (283 aa).

Catalysis depends on aspartate 68, which acts as the Proton acceptor. NAD(+)-binding positions include 68-69 (DG), 142-143 (ND), arginine 153, aspartate 172, 183-188 (TAYSLS), and glutamine 242.

This sequence belongs to the NAD kinase family. It depends on a divalent metal cation as a cofactor.

Its subcellular location is the cytoplasm. It catalyses the reaction NAD(+) + ATP = ADP + NADP(+) + H(+). Its function is as follows. Involved in the regulation of the intracellular balance of NAD and NADP, and is a key enzyme in the biosynthesis of NADP. Catalyzes specifically the phosphorylation on 2'-hydroxyl of the adenosine moiety of NAD to yield NADP. The protein is NAD kinase of Thermoanaerobacter pseudethanolicus (strain ATCC 33223 / 39E) (Clostridium thermohydrosulfuricum).